The chain runs to 210 residues: Probable septum site-determining protein MinC (210 aa).

This sequence belongs to the MinC family. As to quaternary structure, interacts with MinD and FtsZ.

In terms of biological role, cell division inhibitor that blocks the formation of polar Z ring septums. Rapidly oscillates between the poles of the cell to destabilize FtsZ filaments that have formed before they mature into polar Z rings. Prevents FtsZ polymerization. In Thermotoga petrophila (strain ATCC BAA-488 / DSM 13995 / JCM 10881 / RKU-1), this protein is Probable septum site-determining protein MinC.